A 610-amino-acid polypeptide reads, in one-letter code: Aspartate--tRNA(Asp/Asn) ligase (610 aa).

L-aspartate is bound at residue E177. An aspartate region spans residues 201–204 (QLFK). An L-aspartate-binding site is contributed by R223. Residues 223 to 225 (RDE) and Q232 contribute to the ATP site. H461 contributes to the L-aspartate binding site. E499 is a binding site for ATP. R506 lines the L-aspartate pocket. 551–554 (GVDR) lines the ATP pocket.

The protein belongs to the class-II aminoacyl-tRNA synthetase family. Type 1 subfamily. Homodimer.

The protein localises to the cytoplasm. The catalysed reaction is tRNA(Asx) + L-aspartate + ATP = L-aspartyl-tRNA(Asx) + AMP + diphosphate. In terms of biological role, aspartyl-tRNA synthetase with relaxed tRNA specificity since it is able to aspartylate not only its cognate tRNA(Asp) but also tRNA(Asn). Reaction proceeds in two steps: L-aspartate is first activated by ATP to form Asp-AMP and then transferred to the acceptor end of tRNA(Asp/Asn). This is Aspartate--tRNA(Asp/Asn) ligase from Parasynechococcus marenigrum (strain WH8102).